Here is a 481-residue protein sequence, read N- to C-terminus: 1-acylglycerol-3-phosphate O-acyltransferase PNPLA3 (481 aa).

The Cytoplasmic segment spans residues 1–41 (MYDAERGWSLSFAGCGFLGFYHVGATRCLSEHAPHLLRDAR). Positions 10 to 179 (LSFAGCGFLG…SDNVPFIDAK (170 aa)) constitute a PNPLA domain. A GXGXXG motif is present at residues 14-19 (GCGFLG). Residues 42 to 62 (MLFGASAGALHCVGVLSGIPL) form a helical; Signal-anchor for type II membrane protein membrane-spanning segment. The GXSXG motif lies at 45 to 49 (GASAG). The active-site Nucleophile is S47. Over 63–481 (EQTLQVLSDL…FPSFSLEKSL (419 aa)) the chain is Lumenal. An N-linked (GlcNAc...) asparagine glycan is attached at N89. The Proton acceptor role is filled by D166. Residues 166–168 (DGG) carry the DGA/G motif. N-linked (GlcNAc...) asparagine glycosylation occurs at N280.

It is found in the membrane. Its subcellular location is the lipid droplet. The enzyme catalyses a 1-acyl-sn-glycero-3-phosphate + an acyl-CoA = a 1,2-diacyl-sn-glycero-3-phosphate + CoA. It carries out the reaction a triacylglycerol + H2O = a diacylglycerol + a fatty acid + H(+). It catalyses the reaction a 1-acylglycerol + a 1,3-diacylglycerol = a triacylglycerol + glycerol. The catalysed reaction is a 1-acylglycerol + a 1,2-diacylglycerol = a triacylglycerol + glycerol. The enzyme catalyses 2 a 1-acylglycerol = a 1,2-diacylglycerol + glycerol. It carries out the reaction 1-(9Z-octadecenoyl)-sn-glycero-3-phosphate + (9Z)-octadecenoyl-CoA = 1,2-di-(9Z-octadecenoyl)-sn-glycero-3-phosphate + CoA. It catalyses the reaction 1-(9Z-octadecenoyl)-sn-glycero-3-phosphate + hexadecanoyl-CoA = 1-(9Z)-octadecenoyl-2-hexadecanoyl-sn-glycero-3-phosphate + CoA. The catalysed reaction is 1-(9Z-octadecenoyl)-sn-glycero-3-phosphate + (9Z,12Z)-octadecadienoyl-CoA = 1-(9Z)-octadecenoyl-2-(9Z,12Z)-octadecadienoyl-sn-glycero-3-phosphate + CoA. The enzyme catalyses 1-(9Z-octadecenoyl)-sn-glycero-3-phosphate + (5Z,8Z,11Z,14Z)-eicosatetraenoyl-CoA = 1-(9Z)-octadecenoyl-2-(5Z,8Z,11Z,14Z)-eicosatetraenoyl-sn-glycero-3-phosphate + CoA. It carries out the reaction 2 1-(9Z-octadecenoyl)-glycerol = 1,2-di-(9Z-octadecenoyl)-glycerol + glycerol. It catalyses the reaction 1-(9Z-octadecenoyl)-glycerol + 1,2-di-(9Z-octadecenoyl)-glycerol = 1,2,3-tri-(9Z-octadecenoyl)-glycerol + glycerol. The catalysed reaction is 1-(9Z-octadecenoyl)-glycerol + 1,3-di-(9Z-octadecenoyl)-glycerol = 1,2,3-tri-(9Z-octadecenoyl)-glycerol + glycerol. The enzyme catalyses 1,2,3-tri-(9Z-octadecenoyl)-glycerol + H2O = 1,3-di-(9Z-octadecenoyl)-glycerol + (9Z)-octadecenoate + H(+). It carries out the reaction a 1,2-diacyl-sn-glycero-3-phosphocholine + H2O = a 1-acyl-sn-glycero-3-phosphocholine + a fatty acid + H(+). Its pathway is phospholipid metabolism. The protein operates within glycerolipid metabolism. Its activity is regulated as follows. The triglyceride lipase activity is inhibited by BEL ((E)-6-(bromomethylene)-3-(1-naphthalenyl)-2H-tetrahydropyran-2-one), a suicide substrate inhibitor. Its function is as follows. Specifically catalyzes coenzyme A (CoA)-dependent acylation of 1-acyl-sn-glycerol 3-phosphate (2-lysophosphatidic acid/LPA) to generate phosphatidic acid (PA), an important metabolic intermediate and precursor for both triglycerides and glycerophospholipids. Does not esterify other lysophospholipids. Acyl donors are long chain (at least C16) fatty acyl-CoAs: arachidonoyl-CoA, linoleoyl-CoA, oleoyl-CoA and at a lesser extent palmitoyl-CoA. Additionally possesses low triacylglycerol lipase and CoA-independent acylglycerol transacylase activities and thus may play a role in acyl-chain remodeling of triglycerides. In vitro may express hydrolytic activity against glycerolipids triacylglycerol, diacylglycerol and monoacylglycerol, with a strong preference for oleic acid as the acyl moiety. However, the triacylglycerol hydrolase activity is controversial and may be very low. Possesses phospholipase A2 activity. In Homo sapiens (Human), this protein is 1-acylglycerol-3-phosphate O-acyltransferase PNPLA3.